The chain runs to 302 residues: Cyclopropane mycolic acid synthase 2 (302 aa).

S-adenosyl-L-methionine contacts are provided by residues 41-42 (YS), 76-84 (LLDIGCGWG), 102-107 (TLSENQ), and 131-132 (WE). Cys-284 is a catalytic residue.

The protein belongs to the CFA/CMAS family. In terms of assembly, homodimer.

It localises to the cytoplasm. The enzyme catalyses a 1-acyl-2-(9Z)-enoyl-sn-glycero-3-phospholipid + S-adenosyl-L-methionine = a 1-acyl-2-(9-cyclopronane)-acyl-sn-glycero-3-phospholipid + S-adenosyl-L-homocysteine + H(+). Its pathway is lipid metabolism; mycolic acid biosynthesis. Catalyzes the formation of trans cyclopropanated ketomycolate or methoxymycolate through the conversion of a double bond to a cyclopropane ring at the proximal position of an oxygenated mycolic acid via the transfer of a methylene group from S-adenosyl-L-methionine. In the absence of MmaA2, CmaA2 has a non-specific cis-cyclopropanating activity and is able to catalyze the conversion of a double bond to a cis cyclopropane ring at the distal position of an alpha mycolic acid. Cyclopropanated mycolic acids are key factors participating in cell envelope permeability, host immunomodulation and persistence. This is Cyclopropane mycolic acid synthase 2 (cmaA2) from Mycobacterium bovis (strain ATCC BAA-935 / AF2122/97).